The sequence spans 552 residues: Steroid transmembrane transporter SLC22A24 (552 aa).

12 consecutive transmembrane segments (helical) span residues 16–36, 144–164, 178–198, 204–224, 235–255, 267–287, 350–370, 378–398, 407–427, 435–455, 469–489, and 496–516; these read FQIL…PHML, LISV…LIFG, CCLL…TFPV, FLGG…MSEW, GIIL…GFVI, IPLF…QWLI, IFYL…LMLN, IFLF…AVLL, ISQM…IFLS, VALA…HTVH, IGLN…LMIL, and LPWI…LLLP. The segment at 524–552 is disordered; it reads PNTIQDVENNRRDSRKTKQEDISMKVTQF. Residues 531-546 are compositionally biased toward basic and acidic residues; sequence ENNRRDSRKTKQEDIS.

It belongs to the major facilitator (TC 2.A.1) superfamily. Organic cation transporter (TC 2.A.1.19) family.

It is found in the cell membrane. It catalyses the reaction estrone 3-sulfate(out) + glutarate(in) = estrone 3-sulfate(in) + glutarate(out). The catalysed reaction is 17beta-estradiol 17-O-(beta-D-glucuronate)(out) + glutarate(in) = 17beta-estradiol 17-O-(beta-D-glucuronate)(in) + glutarate(out). The enzyme catalyses taurocholate(out) + glutarate(in) = taurocholate(in) + glutarate(out). It carries out the reaction glycocholate(out) + glutarate(in) = glycocholate(in) + glutarate(out). It catalyses the reaction dehydroepiandrosterone 3-sulfate(out) + glutarate(in) = dehydroepiandrosterone 3-sulfate(in) + glutarate(out). The catalysed reaction is glutarate(in) + succinate(out) = glutarate(out) + succinate(in). Its function is as follows. Renal transmembrane organic anion/dicarboxylate exchanger that participates in the reabsorption of conjugated steroids, as well as bile acids, driven by an outward gradient of dicarboxylates such as glutarate or succinate. Transports taurocholate, estrone 3-sulfate, and estradiol-17-glucuronide (17beta-estradiol 17-O-(beta-D-glucuronate)), but not androstanediol glucuronide (5alpha-androstane-3alpha,17beta-diol 3-O-(beta-D-glucuronate)). In Equus caballus (Horse), this protein is Steroid transmembrane transporter SLC22A24.